The primary structure comprises 350 residues: Putative deoxyribonuclease-2 (350 aa).

It belongs to the DNase II family.

This Burkholderia pseudomallei (strain 1710b) protein is Putative deoxyribonuclease-2.